Here is a 154-residue protein sequence, read N- to C-terminus: Transcriptional repressor NrdR (154 aa).

Residues 3-34 fold into a zinc finger; the sequence is CPFCAHPDTRVADSRLMEERNAVRRRRHCPNC. Residues 49–139 enclose the ATP-cone domain; sequence PAVIGPDKKR…LHKRFDNPAD (91 aa).

It belongs to the NrdR family. It depends on Zn(2+) as a cofactor.

Functionally, negatively regulates transcription of bacterial ribonucleotide reductase nrd genes and operons by binding to NrdR-boxes. The polypeptide is Transcriptional repressor NrdR (Neisseria meningitidis serogroup B (strain ATCC BAA-335 / MC58)).